Here is a 393-residue protein sequence, read N- to C-terminus: Phosphoglycerate kinase (393 aa).

Residues 21 to 23 (DFN), R37, 60 to 63 (HLGR), R119, and R152 each bind substrate. ATP-binding positions include K202, G291, E322, and 348–351 (GGDT).

Belongs to the phosphoglycerate kinase family. In terms of assembly, monomer.

The protein localises to the cytoplasm. It catalyses the reaction (2R)-3-phosphoglycerate + ATP = (2R)-3-phospho-glyceroyl phosphate + ADP. It functions in the pathway carbohydrate degradation; glycolysis; pyruvate from D-glyceraldehyde 3-phosphate: step 2/5. In Coprothermobacter proteolyticus (strain ATCC 35245 / DSM 5265 / OCM 4 / BT), this protein is Phosphoglycerate kinase.